The following is a 242-amino-acid chain: Sugar fermentation stimulation protein homolog (242 aa).

It belongs to the SfsA family.

This Methanosphaera stadtmanae (strain ATCC 43021 / DSM 3091 / JCM 11832 / MCB-3) protein is Sugar fermentation stimulation protein homolog.